A 249-amino-acid chain; its full sequence is Diaminopimelate epimerase (249 aa).

Substrate contacts are provided by Asn-11 and Asn-60. The Proton donor role is filled by Cys-69. Residues 70 to 71 (GN), Asn-164, and 182 to 183 (ER) contribute to the substrate site. Cys-192 serves as the catalytic Proton acceptor. 193 to 194 (GT) contacts substrate.

The protein belongs to the diaminopimelate epimerase family. As to quaternary structure, homodimer.

The protein resides in the cytoplasm. The catalysed reaction is (2S,6S)-2,6-diaminopimelate = meso-2,6-diaminopimelate. The protein operates within amino-acid biosynthesis; L-lysine biosynthesis via DAP pathway; DL-2,6-diaminopimelate from LL-2,6-diaminopimelate: step 1/1. Its function is as follows. Catalyzes the stereoinversion of LL-2,6-diaminopimelate (L,L-DAP) to meso-diaminopimelate (meso-DAP), a precursor of L-lysine and an essential component of the bacterial peptidoglycan. The protein is Diaminopimelate epimerase of Campylobacter jejuni subsp. jejuni serotype O:2 (strain ATCC 700819 / NCTC 11168).